Here is a 185-residue protein sequence, read N- to C-terminus: Comitin (185 aa).

In terms of domain architecture, Bulb-type lectin spans 1-123; that stretch reads MELLRQGEHL…YKQILYSSKP (123 aa). Positions 138 to 185 are disordered; sequence SGHPQSAYPPQQPGYGYPAQPGYPPQPGYPPQHGYPPQHGYPQQPGYY. A compositionally biased stretch (low complexity) spans 141–157; it reads PQSAYPPQQPGYGYPAQ. A run of 5 repeats spans residues 153-158, 159-164, 165-170, 171-176, and 177-182. A 5 X 6 AA tandem repeats of G-Y-P-X-Q-[PH] region spans residues 153–182; that stretch reads GYPAQPGYPPQPGYPPQHGYPPQHGYPQQP. Pro residues predominate over residues 158–171; sequence PGYPPQPGYPPQHG. Residues 172 to 185 are compositionally biased toward low complexity; the sequence is YPPQHGYPQQPGYY.

Homodimer in solution. The N-terminus is blocked.

The protein resides in the golgi apparatus membrane. Its subcellular location is the endomembrane system. The protein localises to the cytoplasm. It localises to the cytoskeleton. May have a role in cell motility. It has high affinity for both G-actin and F-actin. Binds to vesicle membranes via mannose residues and, by way of its interaction with actin, links these membranes to the cytoskeleton. This Dictyostelium discoideum (Social amoeba) protein is Comitin (comA).